A 502-amino-acid chain; its full sequence is MTEKKYIVALDQGTTSSRAVVMDHDANIISVSQREFEQIYPKPGWVEHDPMEIWATQSSTLVEVLAKADISSDQIAAIGITNQRETTIVWEKETGKPIYNAIVWQCRRTAEICEHLKRDGMEEYIRNNTGLVIDPYFSGTKVKWILDHVEGSRERARRGELLFGTVDTWLIWKMTQGRVHVTDYTNASRTMLFNIHTLDWDDKMLEVLDIPREMLPEVRRSSEVYGQTNIGGKGGTRIPISGIAGDQQAALFGQLCVKEGMAKNTYGTGCFMLMNTGEKAVKSENGLLTTIACGPTGEVNYALEGAVFMAGASIQWLRDEMKLINDAYDSEYFATKVQNTNGVYVVPAFTGLGAPYWDPYARGAIFGLTRGVNANHIIRATLESIAYQTRDVLEAMQADSGIRLHALRVDGGAVANNFLMQFQSDILGTRVERPEVREVTALGAAYLAGLAVGFWQNLDELQEKAVIEREFRPGIETTERNYRYAGWKKAIKRAMAWEEHDE.

Residue T14 participates in ADP binding. Positions 14, 15, and 16 each coordinate ATP. Sn-glycerol 3-phosphate is bound at residue T14. R18 provides a ligand contact to ADP. 4 residues coordinate sn-glycerol 3-phosphate: R84, E85, Y136, and D246. Positions 84, 85, 136, 246, and 247 each coordinate glycerol. The ADP site is built by T268 and G311. The ATP site is built by T268, G311, Q315, and G412. ADP-binding residues include G412 and N416.

This sequence belongs to the FGGY kinase family. In terms of assembly, homotetramer and homodimer (in equilibrium). Heterodimer with EIIA-Glc. Binds 1 zinc ion per glycerol kinase EIIA-Glc dimer. The zinc ion is important for dimerization.

It carries out the reaction glycerol + ATP = sn-glycerol 3-phosphate + ADP + H(+). It functions in the pathway polyol metabolism; glycerol degradation via glycerol kinase pathway; sn-glycerol 3-phosphate from glycerol: step 1/1. Its activity is regulated as follows. Activity of this regulatory enzyme is affected by several metabolites. Allosterically and non-competitively inhibited by fructose 1,6-bisphosphate (FBP) and unphosphorylated phosphocarrier protein EIIA-Glc (III-Glc), an integral component of the bacterial phosphotransferase (PTS) system. Key enzyme in the regulation of glycerol uptake and metabolism. Catalyzes the phosphorylation of glycerol to yield sn-glycerol 3-phosphate. This is Glycerol kinase from Escherichia coli O81 (strain ED1a).